Reading from the N-terminus, the 185-residue chain is MAETAYVPRLREQFDREIRGKLTEQFGYANVMQVPRLDKVVLNMGIGEAVNDRKKAETAAADLALIAGQKPIVTYSRVAIATFKLRENQPIGAKVTLRKAKMYEFIDRLINVALPRVRDFRGLNPKSFDGRGNYSLGIKEHIIFPEIDFDKMGETWGMDVTVCTTARTDDEARALLTAFNFPFRQ.

This sequence belongs to the universal ribosomal protein uL5 family. In terms of assembly, part of the 50S ribosomal subunit; part of the 5S rRNA/L5/L18/L25 subcomplex. Contacts the 5S rRNA and the P site tRNA. Forms a bridge to the 30S subunit in the 70S ribosome.

This is one of the proteins that bind and probably mediate the attachment of the 5S RNA into the large ribosomal subunit, where it forms part of the central protuberance. In the 70S ribosome it contacts protein S13 of the 30S subunit (bridge B1b), connecting the 2 subunits; this bridge is implicated in subunit movement. Contacts the P site tRNA; the 5S rRNA and some of its associated proteins might help stabilize positioning of ribosome-bound tRNAs. In Rhodopseudomonas palustris (strain BisB18), this protein is Large ribosomal subunit protein uL5.